The primary structure comprises 394 residues: Cell division protein FtsZ (394 aa).

Residues 21 to 25, 108 to 110, Glu-139, Arg-143, and Asp-187 contribute to the GTP site; these read GGGGN and GTG.

The protein belongs to the FtsZ family. In terms of assembly, homodimer. Polymerizes to form a dynamic ring structure in a strictly GTP-dependent manner. Interacts directly with several other division proteins. Interacts with the SulA inhibitor.

The protein localises to the cytoplasm. Its function is as follows. Essential cell division protein that forms a contractile ring structure (Z ring) at the future cell division site. The regulation of the ring assembly controls the timing and the location of cell division. One of the functions of the FtsZ ring is to recruit other cell division proteins to the septum to produce a new cell wall between the dividing cells. Binds GTP and shows GTPase activity. The polypeptide is Cell division protein FtsZ (Pseudomonas aeruginosa (strain ATCC 15692 / DSM 22644 / CIP 104116 / JCM 14847 / LMG 12228 / 1C / PRS 101 / PAO1)).